We begin with the raw amino-acid sequence, 212 residues long: Thiamine-phosphate synthase (212 aa).

Residues 40 to 44 and Asn-75 contribute to the 4-amino-2-methyl-5-(diphosphooxymethyl)pyrimidine site; that span reads QFREK. Residues Asp-76 and Asp-95 each coordinate Mg(2+). Residue Ser-113 coordinates 4-amino-2-methyl-5-(diphosphooxymethyl)pyrimidine. 139-141 provides a ligand contact to 2-[(2R,5Z)-2-carboxy-4-methylthiazol-5(2H)-ylidene]ethyl phosphate; sequence TTS. Position 142 (Lys-142) interacts with 4-amino-2-methyl-5-(diphosphooxymethyl)pyrimidine. Residues Gly-171 and 191–192 contribute to the 2-[(2R,5Z)-2-carboxy-4-methylthiazol-5(2H)-ylidene]ethyl phosphate site; that span reads IS.

The protein belongs to the thiamine-phosphate synthase family. Mg(2+) serves as cofactor.

It carries out the reaction 2-[(2R,5Z)-2-carboxy-4-methylthiazol-5(2H)-ylidene]ethyl phosphate + 4-amino-2-methyl-5-(diphosphooxymethyl)pyrimidine + 2 H(+) = thiamine phosphate + CO2 + diphosphate. It catalyses the reaction 2-(2-carboxy-4-methylthiazol-5-yl)ethyl phosphate + 4-amino-2-methyl-5-(diphosphooxymethyl)pyrimidine + 2 H(+) = thiamine phosphate + CO2 + diphosphate. The enzyme catalyses 4-methyl-5-(2-phosphooxyethyl)-thiazole + 4-amino-2-methyl-5-(diphosphooxymethyl)pyrimidine + H(+) = thiamine phosphate + diphosphate. It participates in cofactor biosynthesis; thiamine diphosphate biosynthesis; thiamine phosphate from 4-amino-2-methyl-5-diphosphomethylpyrimidine and 4-methyl-5-(2-phosphoethyl)-thiazole: step 1/1. Its function is as follows. Condenses 4-methyl-5-(beta-hydroxyethyl)thiazole monophosphate (THZ-P) and 2-methyl-4-amino-5-hydroxymethyl pyrimidine pyrophosphate (HMP-PP) to form thiamine monophosphate (TMP). This is Thiamine-phosphate synthase from Staphylococcus saprophyticus subsp. saprophyticus (strain ATCC 15305 / DSM 20229 / NCIMB 8711 / NCTC 7292 / S-41).